A 270-amino-acid polypeptide reads, in one-letter code: 3-methyl-2-oxobutanoate hydroxymethyltransferase (270 aa).

2 residues coordinate Mg(2+): D41 and D80. Residues 41-42, D80, and K109 each bind 3-methyl-2-oxobutanoate; that span reads DS. Residue E111 participates in Mg(2+) binding. Catalysis depends on E178, which acts as the Proton acceptor.

Belongs to the PanB family. As to quaternary structure, homodecamer; pentamer of dimers. It depends on Mg(2+) as a cofactor.

The protein localises to the cytoplasm. It carries out the reaction 3-methyl-2-oxobutanoate + (6R)-5,10-methylene-5,6,7,8-tetrahydrofolate + H2O = 2-dehydropantoate + (6S)-5,6,7,8-tetrahydrofolate. The protein operates within cofactor biosynthesis; (R)-pantothenate biosynthesis; (R)-pantoate from 3-methyl-2-oxobutanoate: step 1/2. Its function is as follows. Catalyzes the reversible reaction in which hydroxymethyl group from 5,10-methylenetetrahydrofolate is transferred onto alpha-ketoisovalerate to form ketopantoate. In Thermotoga maritima (strain ATCC 43589 / DSM 3109 / JCM 10099 / NBRC 100826 / MSB8), this protein is 3-methyl-2-oxobutanoate hydroxymethyltransferase.